Consider the following 303-residue polypeptide: Hemolysin E (303 aa).

Cysteine 87 and cysteine 285 form a disulfide bridge. A helical transmembrane segment spans residues 179–199 (AGAAAGIVAGPFGLIISYSIA).

This sequence belongs to the hemolysin E family. As to quaternary structure, monomer and oligomer. In periplasm, it is present as a monomer, while in outer membrane vesicles, it oligomerizes to form a pore structure that is active. The pore is formed by a dodecamer. Post-translationally, in periplasm, it forms a disulfide bond, which prevents the oligomerization. In outer membrane vesicles, the redox status prevents formation of the disulfide bond, leading to oligomerization and pore formation.

The protein localises to the secreted. It is found in the periplasm. It localises to the host cell membrane. In terms of biological role, toxin, which has some hemolytic activity towards mammalian cells. Acts by forming a pore-like structure upon contact with mammalian cells. This Salmonella paratyphi A (strain ATCC 9150 / SARB42) protein is Hemolysin E (hlyE).